An 846-amino-acid polypeptide reads, in one-letter code: Exonuclease 1 (846 aa).

Positions 1–99 (MGIQGLLQFI…RSRRERRQAN (99 aa)) are N-domain. Mg(2+) contacts are provided by Asp30, Asp78, Glu150, Asp152, Asp171, Asp173, Asp225, and Asp270. Residues 129–387 (MAHKVIKAAR…RPESGTVSDA (259 aa)) form an interaction with MSH3 region. The tract at residues 138-229 (RSQGVDCLVA…ILSGCDYLSS (92 aa)) is I-domain. A disordered region spans residues 372–396 (HRNYSPRPESGTVSDAPQLKENPST). Ser376 bears the Phosphoserine mark. Over residues 382–396 (GTVSDAPQLKENPST) the composition is skewed to polar residues. The interaction with MLH1 stretch occupies residues 388 to 490 (PQLKENPSTV…NKFATFLQRK (103 aa)). The Nuclear localization signal motif lies at 418–421 (KRPR). Phosphoserine occurs at positions 422 and 454. An N6-acetyllysine modification is found at Lys482. At Thr581 the chain carries Phosphothreonine. 2 positions are modified to phosphoserine: Ser598 and Ser610. Positions 600-846 (PTLGTLRSCF…CGRVQRAIFQ (247 aa)) are interaction with MSH2. A disordered region spans residues 618–781 (FSRTPSPSPS…SIQKRKHHNA (164 aa)). 2 stretches are compositionally biased toward polar residues: residues 620–631 (RTPSPSPSTALQ) and 639–654 (SPTS…VSQL). Thr621 bears the Phosphothreonine mark. Phosphoserine occurs at positions 623, 639, 660, and 674. The span at 655–671 (KSEESSDDESHPLREEA) shows a compositional bias: basic and acidic residues. Composition is skewed to polar residues over residues 672–689 (CSSQ…SSNA), 713–722 (DSQSDQTSKL), and 743–754 (KSSSADSLSTTK). Phosphoserine; by ATR is present on Ser714. Position 746 is a phosphoserine (Ser746). The interaction with MLH1 stretch occupies residues 787 to 846 (LQIKLNELWKNFGFKKDSEKLPPCKKPLSPVRDNIQLTPEAEEDIFNKPECGRVQRAIFQ).

The protein belongs to the XPG/RAD2 endonuclease family. EXO1 subfamily. In terms of assembly, interacts with the MLH1-PMS2 heterodimer via MLH1. Interacts with MSH3. Interacts with the MSH2-MSH6 heterodimer via MSH2, and this interaction may increase the processivity of the 5'-&gt;3' exonuclease activity. Interacts with PCNA, and this interaction may both stimulate the cryptic 3'-&gt;5' exonuclease activity and suppress the 5'-&gt;3' exonuclease activity. Interacts with WRN, and this interaction stimulates both the 5'-&gt;3' exonuclease activity and cleavage of 5'-overhanging flap structures. Interacts with RECQL/RECQ1, and this interaction stimulates cleavage of 5'-overhanging flap structures. Interacts with DNA helicase ZGRF1; the interaction is increased following DNA damage induction. Mg(2+) is required as a cofactor. In terms of processing, phosphorylated upon DNA damage and in response to agents stalling DNA replication, probably by ATM or ATR. Phosphorylation at Ser-454, Thr-621 and Ser-714 is induced upon DNA-damage caused by treatment with hydroxyurea (HU) but not upon IR treatment. The HU-induced EXO1 triple phosphorylation facilitates destabilization/degradation of the protein. Highly expressed in bone marrow, testis and thymus. Expressed at lower levels in colon, lymph nodes, ovary, placenta, prostate, small intestine, spleen and stomach.

The protein resides in the nucleus. 5'-&gt;3' double-stranded DNA exonuclease which may also possess a cryptic 3'-&gt;5' double-stranded DNA exonuclease activity. Functions in DNA mismatch repair (MMR) to excise mismatch-containing DNA tracts directed by strand breaks located either 5' or 3' to the mismatch. Also exhibits endonuclease activity against 5'-overhanging flap structures similar to those generated by displacement synthesis when DNA polymerase encounters the 5'-end of a downstream Okazaki fragment. Required for somatic hypermutation (SHM) and class switch recombination (CSR) of immunoglobulin genes. Essential for male and female meiosis. The polypeptide is Exonuclease 1 (EXO1) (Homo sapiens (Human)).